Here is a 308-residue protein sequence, read N- to C-terminus: ATP synthase gamma chain (308 aa).

Belongs to the ATPase gamma chain family. F-type ATPases have 2 components, CF(1) - the catalytic core - and CF(0) - the membrane proton channel. CF(1) has five subunits: alpha(3), beta(3), gamma(1), delta(1), epsilon(1). CF(0) has three main subunits: a, b and c.

It is found in the cell membrane. Functionally, produces ATP from ADP in the presence of a proton gradient across the membrane. The gamma chain is believed to be important in regulating ATPase activity and the flow of protons through the CF(0) complex. This is ATP synthase gamma chain from Lacticaseibacillus casei (strain BL23) (Lactobacillus casei).